The sequence spans 554 residues: Probable ATP-binding cassette sub-family F member 3 homolog (554 aa).

ABC transporter domains lie at Gly-89–Arg-285 and Ile-351–Val-554. ATP contacts are provided by residues Gly-122–Thr-129 and Gly-383–Ser-390.

The protein belongs to the ABC transporter superfamily. ABCF family. EF3 subfamily.

In Encephalitozoon cuniculi (strain GB-M1) (Microsporidian parasite), this protein is Probable ATP-binding cassette sub-family F member 3 homolog.